A 416-amino-acid chain; its full sequence is MSSDAQEASDDRRKYEFRKVIEELRDFEGSGTQLVTIYIPEDRQVSDVVAHVTQEHSEASNIKSKQTRTAVQDALTSIKDRLRYYDTFPPENGMVIFSGAIDAGGGQTDMVTRTLESPPQPVESFRYHCDSAFLTEPLEHMLEDSGLFGLIVLDRREANVGWLKGKRVEPVKSASSLVPGKQRKGGQSAQRFARLRLEAIDNFYQEVAGMADDLFVDKRHELDGILVGGPSPTKDEFLDGDYLHHELQDKVLGKFDVAYTDESGLKDLVDNASEALADQEIVEDKRHMDEFFENLHTGEEATYGFDQTRRNLIMGSVDRLLISEDLRSDVVVYECPNGHEEYEVVDSRHSTPSHECSECGEEADVDEREDVIEHLMSIAEQRGTDTKFISTDFEKGEQLLDAFGGIAGILRYSTGV.

The protein belongs to the eukaryotic release factor 1 family. As to quaternary structure, heterodimer of two subunits, one of which binds GTP.

The protein resides in the cytoplasm. Its function is as follows. Directs the termination of nascent peptide synthesis (translation) in response to the termination codons UAA, UAG and UGA. The sequence is that of Peptide chain release factor subunit 1 from Halorubrum lacusprofundi (strain ATCC 49239 / DSM 5036 / JCM 8891 / ACAM 34).